A 153-amino-acid chain; its full sequence is Small ribosomal subunit protein uS13 (153 aa).

Residues 132–153 (VRGQRTRSHHRKGRTVGVIKKK) form a disordered region. The span at 135 to 153 (QRTRSHHRKGRTVGVIKKK) shows a compositional bias: basic residues.

This sequence belongs to the universal ribosomal protein uS13 family. As to quaternary structure, part of the 30S ribosomal subunit. Forms a loose heterodimer with protein S19. Forms two bridges to the 50S subunit in the 70S ribosome.

Its function is as follows. Located at the top of the head of the 30S subunit, it contacts several helices of the 16S rRNA. In the 70S ribosome it contacts the 23S rRNA (bridge B1a) and protein L5 of the 50S subunit (bridge B1b), connecting the 2 subunits; these bridges are implicated in subunit movement. This Nanoarchaeum equitans (strain Kin4-M) protein is Small ribosomal subunit protein uS13.